Reading from the N-terminus, the 169-residue chain is Cell division inhibitor SulA (169 aa).

A ftsZ binding region spans residues A106 to Y112. The segment at K162–H169 is lon protease binding.

Belongs to the SulA family. As to quaternary structure, interacts with FtsZ. In terms of processing, is rapidly cleaved and degraded by the Lon protease once DNA damage is repaired.

Its function is as follows. Component of the SOS system and an inhibitor of cell division. Accumulation of SulA causes rapid cessation of cell division and the appearance of long, non-septate filaments. In the presence of GTP, binds a polymerization-competent form of FtsZ in a 1:1 ratio, thus inhibiting FtsZ polymerization and therefore preventing it from participating in the assembly of the Z ring. This mechanism prevents the premature segregation of damaged DNA to daughter cells during cell division. The sequence is that of Cell division inhibitor SulA from Shigella boydii serotype 18 (strain CDC 3083-94 / BS512).